The primary structure comprises 250 residues: Ubiquinone/menaquinone biosynthesis C-methyltransferase UbiE (250 aa).

Residues serine 73, aspartate 94, and 122-123 (NA) contribute to the S-adenosyl-L-methionine site.

It belongs to the class I-like SAM-binding methyltransferase superfamily. MenG/UbiE family.

The catalysed reaction is a 2-demethylmenaquinol + S-adenosyl-L-methionine = a menaquinol + S-adenosyl-L-homocysteine + H(+). The enzyme catalyses a 2-methoxy-6-(all-trans-polyprenyl)benzene-1,4-diol + S-adenosyl-L-methionine = a 5-methoxy-2-methyl-3-(all-trans-polyprenyl)benzene-1,4-diol + S-adenosyl-L-homocysteine + H(+). It functions in the pathway quinol/quinone metabolism; menaquinone biosynthesis; menaquinol from 1,4-dihydroxy-2-naphthoate: step 2/2. The protein operates within cofactor biosynthesis; ubiquinone biosynthesis. Its function is as follows. Methyltransferase required for the conversion of demethylmenaquinol (DMKH2) to menaquinol (MKH2) and the conversion of 2-polyprenyl-6-methoxy-1,4-benzoquinol (DDMQH2) to 2-polyprenyl-3-methyl-6-methoxy-1,4-benzoquinol (DMQH2). In Legionella pneumophila (strain Lens), this protein is Ubiquinone/menaquinone biosynthesis C-methyltransferase UbiE.